Here is a 73-residue protein sequence, read N- to C-terminus: UPF0270 protein SG2298 (73 aa).

This sequence belongs to the UPF0270 family.

In Sodalis glossinidius (strain morsitans), this protein is UPF0270 protein SG2298.